Consider the following 516-residue polypeptide: Adenosine deaminase (516 aa).

Positions Met-1 to Asp-20 are cleaved as a signal peptide.

Belongs to the metallo-dependent hydrolases superfamily. Adenosine and AMP deaminases family. ADGF subfamily. Requires Zn(2+) as cofactor. As to expression, salivary gland (at protein level).

The protein resides in the secreted. It carries out the reaction adenosine + H2O + H(+) = inosine + NH4(+). Its function is as follows. Catalyzes the deamination of adenosine to inosine. This chain is Adenosine deaminase, found in Phlebotomus duboscqi (Sandfly).